A 146-amino-acid chain; its full sequence is Hemoglobin subunit beta (146 aa).

Valine 1 is modified (N-acetylvaline). Residues 2-146 (HLSSEEKGLI…VANALAHKYH (145 aa)) form the Globin domain. Threonine 12 carries the phosphothreonine modification. Lysine 59 is modified (N6-acetyllysine). Histidine 63 is a heme b binding site. At lysine 82 the chain carries N6-acetyllysine. Histidine 92 provides a ligand contact to heme b. An S-nitrosocysteine modification is found at cysteine 93. Lysine 144 bears the N6-acetyllysine mark.

It belongs to the globin family. Heterotetramer of two alpha chains and two beta chains. Red blood cells.

Involved in oxygen transport from the lung to the various peripheral tissues. The chain is Hemoglobin subunit beta (HBB) from Potorous tridactylus (Potoroo).